The sequence spans 162 residues: 3-isopropylmalate dehydratase small subunit (162 aa).

It belongs to the LeuD family. LeuD type 2 subfamily. Heterodimer of LeuC and LeuD.

The enzyme catalyses (2R,3S)-3-isopropylmalate = (2S)-2-isopropylmalate. The protein operates within amino-acid biosynthesis; L-leucine biosynthesis; L-leucine from 3-methyl-2-oxobutanoate: step 2/4. Catalyzes the isomerization between 2-isopropylmalate and 3-isopropylmalate, via the formation of 2-isopropylmaleate. The polypeptide is 3-isopropylmalate dehydratase small subunit (Pyrobaculum neutrophilum (strain DSM 2338 / JCM 9278 / NBRC 100436 / V24Sta) (Thermoproteus neutrophilus)).